Reading from the N-terminus, the 259-residue chain is Exotoxin A regulatory protein (259 aa).

It localises to the cell inner membrane. Its function is as follows. Positive regulation of toxA gene transcription. The chain is Exotoxin A regulatory protein (toxR) from Pseudomonas aeruginosa (strain ATCC 15692 / DSM 22644 / CIP 104116 / JCM 14847 / LMG 12228 / 1C / PRS 101 / PAO1).